The following is a 253-amino-acid chain: MLAKRIIPCLDVKDGRVVKGVNFLNLKDAGDPVQIASEYNELGADELVFLDITASYEKRKIMIEVVKRTSEKVFIPLTVGGGISDLDDIKDILRAGADKVSINTQAVKQPTLIRQAAVRFGSQCVVVAIDAKRRSDGSGFDVYINGGRVNTGLDVIEWAKKVESLGAGEILLTSMDKDGTKDGYDIELTRMVSEAVNIPVIASGGAGNKEHFKEVFTEGKADAALAASVFHYRELEIKEVKRYLKEEGIPVRI.

Active-site residues include D11 and D130.

This sequence belongs to the HisA/HisF family. In terms of assembly, heterodimer of HisH and HisF.

The protein resides in the cytoplasm. It catalyses the reaction 5-[(5-phospho-1-deoxy-D-ribulos-1-ylimino)methylamino]-1-(5-phospho-beta-D-ribosyl)imidazole-4-carboxamide + L-glutamine = D-erythro-1-(imidazol-4-yl)glycerol 3-phosphate + 5-amino-1-(5-phospho-beta-D-ribosyl)imidazole-4-carboxamide + L-glutamate + H(+). Its pathway is amino-acid biosynthesis; L-histidine biosynthesis; L-histidine from 5-phospho-alpha-D-ribose 1-diphosphate: step 5/9. Its function is as follows. IGPS catalyzes the conversion of PRFAR and glutamine to IGP, AICAR and glutamate. The HisF subunit catalyzes the cyclization activity that produces IGP and AICAR from PRFAR using the ammonia provided by the HisH subunit. The sequence is that of Imidazole glycerol phosphate synthase subunit HisF from Thermoanaerobacter sp. (strain X514).